The following is a 425-amino-acid chain: Protein translocase subunit SecY (425 aa).

Helical transmembrane passes span 15-35, 62-82, 113-131, 139-159, 168-188, 201-221, 266-286, 304-324, 364-384, and 385-405; these read LLSL…VPGI, TVVV…SIIM, LLTL…FYLK, LVLA…VLWL, LGNG…PGFV, IGSW…IVLL, PIIL…LGLL, IIYW…YSTI, LLGA…QAIL, and SLSG…GVIL.

The protein belongs to the SecY/SEC61-alpha family. As to quaternary structure, component of the plastid Sec protein translocase complex, which is composed of at least SecY, SecE and SecG.

It is found in the plastid. The protein localises to the chloroplast thylakoid membrane. Functionally, the central subunit of the protein translocation channel SecYE. Consists of two halves formed by TMs 1-5 and 6-10. These two domains form a lateral gate at the front which open onto the bilayer between TMs 2 and 7, and are clamped together by SecE at the back. The channel is closed by both a pore ring composed of hydrophobic SecY resides and a short helix (helix 2A) on the extracellular side of the membrane which forms a plug. This Trieres chinensis (Marine centric diatom) protein is Protein translocase subunit SecY.